Reading from the N-terminus, the 588-residue chain is Adenine deaminase (588 aa).

Belongs to the metallo-dependent hydrolases superfamily. Adenine deaminase family. In terms of assembly, homodimer. It depends on Mn(2+) as a cofactor.

The catalysed reaction is adenine + H2O + H(+) = hypoxanthine + NH4(+). The chain is Adenine deaminase from Shigella sonnei (strain Ss046).